Consider the following 724-residue polypeptide: Outer spore wall protein 2 (724 aa).

Disordered stretches follow at residues N407–V427 and T477–K497.

It localises to the cytoplasm. The protein resides in the prospore membrane. May be involved in a late step of spore wall assembly. The polypeptide is Outer spore wall protein 2 (OSW2) (Saccharomyces cerevisiae (strain ATCC 204508 / S288c) (Baker's yeast)).